A 1468-amino-acid polypeptide reads, in one-letter code: Centrosomal protein of 290 kDa (1468 aa).

Coiled-coil stretches lie at residues 1–25 (ERQL…VGEK), 52–121 (SLSE…IEQA), 172–292 (KMYE…DEKA), 318–528 (VASK…EAQK), 559–592 (RIIL…ILSR), 627–688 (HTLK…QADN), and 736–1441 (IKLK…SEQF). The tract at residues 1060–1468 (TTGLTVDQVM…QENPVNFPIY (409 aa)) is self-association (with itself or N-terminus). The disordered stretch occupies residues 1130–1152 (LSKDAYSRPSTSGIDSDDHYQRE).

In terms of assembly, part of the tectonic-like complex (also named B9 complex). Interacts with ATF4 via its N-terminal region. Associates with the BBSome complex, interacting (via N-terminus) with BBS4. Interacts with IQCB1/NPHP5; IQCB1 and CEP290/NPHP6 are proposed to form a functional NPHP5-6 module localized to the centrosome. Interacts with NPHP4; the interaction likely requires additional interactors. Interacts with ZNF423, FAM161A, CEP162, CEP162, CEP131, TALPID3, CCDC13, CC2D2A, RPGRIP1. Can self-associate (homo- or heteromeric). Interacts with CCP110; required for suppressing cilia formation. Interacts with RPGR. Associates (via C-terminus) with microtubules; association to microtubule is reduced in response to cellular stress, such as ultraviolet light (UV) radiation or heat shock, in a process that requires p38 MAP kinase signaling. Interacts with FAM161A. Interacts with PCM1. Interacts with CCDC66. Interacts with ARMC9 and CSPP1. Post-translationally, ubiquitinated. May undergo monoubiquitination; monoubiquitination is inhibited in response to cellular stress, such as ultraviolet light (UV) radiation or heat shock, but does not cause its displacement from centriolar satellites.

It localises to the cytoplasm. It is found in the cytoskeleton. The protein localises to the microtubule organizing center. Its subcellular location is the centrosome. The protein resides in the centriolar satellite. It localises to the nucleus. It is found in the cell projection. The protein localises to the cilium. Its subcellular location is the cilium basal body. The protein resides in the centriole. It localises to the cytoplasmic vesicle. Its function is as follows. Involved in early and late steps in cilia formation. Its association with CCP110 is required for inhibition of primary cilia formation by CCP110. May play a role in early ciliogenesis in the disappearance of centriolar satellites and in the transition of primary ciliar vesicles (PCVs) to capped ciliary vesicles (CCVs). Required for the centrosomal recruitment of RAB8A and for the targeting of centriole satellite proteins to centrosomes such as of PCM1. Required for the correct localization of ciliary and phototransduction proteins in retinal photoreceptor cells; may play a role in ciliary transport processes. Required for efficient recruitment of RAB8A to primary cilium. In the ciliary transition zone is part of the tectonic-like complex which is required for tissue-specific ciliogenesis and may regulate ciliary membrane composition. Involved in regulation of the BBSome complex integrity, specifically for presence of BBS2, BBS5 and BBS8/TTC8 in the complex, and in ciliary targeting of selected BBSome cargos. May play a role in controlling entry of the BBSome complex to cilia possibly implicating IQCB1/NPHP5. Activates ATF4-mediated transcription. In Bos taurus (Bovine), this protein is Centrosomal protein of 290 kDa (CEP290).